The following is a 147-amino-acid chain: MRTTPLAKTSDIKRKWYVIDATDVSLGRLSTAVASILRGKNKPQYTPNVDTGDYVIVVNAAKLKLTGKKATDKIYYRHSDYRGGLRATPAGELLAKNPVRLVELSVKGMLPKNTLGHQEFMKMHVYAGEDHEHAAQKPEKLDINELI.

Belongs to the universal ribosomal protein uL13 family. In terms of assembly, part of the 50S ribosomal subunit.

Functionally, this protein is one of the early assembly proteins of the 50S ribosomal subunit, although it is not seen to bind rRNA by itself. It is important during the early stages of 50S assembly. This Lactobacillus johnsonii (strain CNCM I-12250 / La1 / NCC 533) protein is Large ribosomal subunit protein uL13.